The following is a 161-amino-acid chain: Probable ribosome biogenesis protein RLP24 (161 aa).

The protein belongs to the eukaryotic ribosomal protein eL24 family. Associated with nucleolar and cytoplasmic pre-60S particles. At the end of biogenesis it dissociates from cytoplasmic pre-60S particles and is likely to be exchanged for its ribosomal homolog, RPL24.

It localises to the nucleus. Its subcellular location is the nucleolus. In terms of biological role, involved in the biogenesis of the 60S ribosomal subunit. Ensures the docking of GTPBP4/NOG1 to pre-60S particles. In Danio rerio (Zebrafish), this protein is Probable ribosome biogenesis protein RLP24 (rsl24d1).